A 292-amino-acid chain; its full sequence is MKILVPATSANLGPGFDCLGLSLKLFNETQIQKSGVFSISIGGEGSDNIFLKKNNIFVNIFYEIYEKLSGKKDNFRFIFQNNIPLSRGLGSSSAVIVGAIASAYYMSGFKVEKERILDEALIYENHPDNIAPATLGGFVCSLVEKNKVYSIKKEIDKDLAAVVVIPNLAMSTEQSRQALAKNLSFNDAVFNLSHASFLTACFLEKKYEFLKFASQDKLHEINRMKNLPELFEVQKFALENKALMSTLSGSGSSFFSLAFKDDALALAKKIQTKFKDFRVQYLEFDDNGFEIC.

84–94 (PLSRGLGSSSA) serves as a coordination point for ATP.

Belongs to the GHMP kinase family. Homoserine kinase subfamily.

It localises to the cytoplasm. The enzyme catalyses L-homoserine + ATP = O-phospho-L-homoserine + ADP + H(+). It participates in amino-acid biosynthesis; L-threonine biosynthesis; L-threonine from L-aspartate: step 4/5. In terms of biological role, catalyzes the ATP-dependent phosphorylation of L-homoserine to L-homoserine phosphate. The sequence is that of Homoserine kinase from Campylobacter jejuni subsp. jejuni serotype O:23/36 (strain 81-176).